A 103-amino-acid polypeptide reads, in one-letter code: MQNQKIRIRLKAFDYRLIDQSAAEIVDTAKRTGAIVRGPVPLPTRIQRFDILRSPHVNKTSRDQLEIRTHQRLMDIVDPTDKTVDALMKLDLPAGVDVEIKLQ.

Belongs to the universal ribosomal protein uS10 family. As to quaternary structure, part of the 30S ribosomal subunit.

Functionally, involved in the binding of tRNA to the ribosomes. In Paraburkholderia xenovorans (strain LB400), this protein is Small ribosomal subunit protein uS10.